Consider the following 927-residue polypeptide: Valine--tRNA ligase (927 aa).

A 'HIGH' region motif is present at residues 45–55 (PNVTGSLHMGH). Positions 571–575 (KMSKS) match the 'KMSKS' region motif. ATP is bound at residue Lys-574. Residues 856-917 (SLIDLAAEAA…EYRDAQDKLA (62 aa)) are a coiled coil.

It belongs to the class-I aminoacyl-tRNA synthetase family. ValS type 1 subfamily. In terms of assembly, monomer.

It localises to the cytoplasm. The catalysed reaction is tRNA(Val) + L-valine + ATP = L-valyl-tRNA(Val) + AMP + diphosphate. Its function is as follows. Catalyzes the attachment of valine to tRNA(Val). As ValRS can inadvertently accommodate and process structurally similar amino acids such as threonine, to avoid such errors, it has a 'posttransfer' editing activity that hydrolyzes mischarged Thr-tRNA(Val) in a tRNA-dependent manner. This is Valine--tRNA ligase from Mesorhizobium japonicum (strain LMG 29417 / CECT 9101 / MAFF 303099) (Mesorhizobium loti (strain MAFF 303099)).